The chain runs to 162 residues: Inorganic pyrophosphatase (162 aa).

Glu8 is a binding site for Mg(2+). Residues Lys16, Arg30, and Tyr42 each contribute to the substrate site. Mg(2+)-binding residues include Asp52, Asp57, Asp84, and Asp89. Asp89 serves as the catalytic Proton acceptor. Substrate is bound at residue Tyr126.

This sequence belongs to the PPase family. In terms of assembly, homohexamer. Mg(2+) serves as cofactor.

The protein localises to the cytoplasm. The catalysed reaction is diphosphate + H2O = 2 phosphate + H(+). In terms of biological role, catalyzes the hydrolysis of inorganic pyrophosphate (PPi) forming two phosphate ions. In Mycobacterium leprae (strain TN), this protein is Inorganic pyrophosphatase.